The sequence spans 284 residues: Bifunctional protein FolD (284 aa).

Residues 166–168 (GAS) and isoleucine 232 contribute to the NADP(+) site.

This sequence belongs to the tetrahydrofolate dehydrogenase/cyclohydrolase family. As to quaternary structure, homodimer.

The catalysed reaction is (6R)-5,10-methylene-5,6,7,8-tetrahydrofolate + NADP(+) = (6R)-5,10-methenyltetrahydrofolate + NADPH. The enzyme catalyses (6R)-5,10-methenyltetrahydrofolate + H2O = (6R)-10-formyltetrahydrofolate + H(+). Its pathway is one-carbon metabolism; tetrahydrofolate interconversion. Catalyzes the oxidation of 5,10-methylenetetrahydrofolate to 5,10-methenyltetrahydrofolate and then the hydrolysis of 5,10-methenyltetrahydrofolate to 10-formyltetrahydrofolate. This Pseudomonas fluorescens (strain Pf0-1) protein is Bifunctional protein FolD.